The primary structure comprises 230 residues: Cytochrome c oxidase subunit 2 (230 aa).

At 1–14 (MAHPTQLGFKDAAM) the chain is on the mitochondrial intermembrane side. A helical membrane pass occupies residues 15–45 (PVMEELLHFHDHALMIVLLISTLVLYIITAM). Residues 46-59 (VSTKLTNKYILDSQ) lie on the Mitochondrial matrix side of the membrane. A helical transmembrane segment spans residues 60 to 87 (EIEIVWTILPAVILVLIALPSLRILYLM). The Mitochondrial intermembrane segment spans residues 88 to 230 (DEINDPHLTI…NWSSLMLEDA (143 aa)). Cu cation-binding residues include H161, C196, E198, C200, H204, and M207. Residue E198 coordinates Mg(2+).

This sequence belongs to the cytochrome c oxidase subunit 2 family. Component of the cytochrome c oxidase (complex IV, CIV), a multisubunit enzyme composed of 14 subunits. The complex is composed of a catalytic core of 3 subunits MT-CO1, MT-CO2 and MT-CO3, encoded in the mitochondrial DNA, and 11 supernumerary subunits COX4I, COX5A, COX5B, COX6A, COX6B, COX6C, COX7A, COX7B, COX7C, COX8 and NDUFA4, which are encoded in the nuclear genome. The complex exists as a monomer or a dimer and forms supercomplexes (SCs) in the inner mitochondrial membrane with NADH-ubiquinone oxidoreductase (complex I, CI) and ubiquinol-cytochrome c oxidoreductase (cytochrome b-c1 complex, complex III, CIII), resulting in different assemblies (supercomplex SCI(1)III(2)IV(1) and megacomplex MCI(2)III(2)IV(2)). Found in a complex with TMEM177, COA6, COX18, COX20, SCO1 and SCO2. Interacts with TMEM177 in a COX20-dependent manner. Interacts with COX20. Interacts with COX16. Cu cation serves as cofactor.

It localises to the mitochondrion inner membrane. The enzyme catalyses 4 Fe(II)-[cytochrome c] + O2 + 8 H(+)(in) = 4 Fe(III)-[cytochrome c] + 2 H2O + 4 H(+)(out). In terms of biological role, component of the cytochrome c oxidase, the last enzyme in the mitochondrial electron transport chain which drives oxidative phosphorylation. The respiratory chain contains 3 multisubunit complexes succinate dehydrogenase (complex II, CII), ubiquinol-cytochrome c oxidoreductase (cytochrome b-c1 complex, complex III, CIII) and cytochrome c oxidase (complex IV, CIV), that cooperate to transfer electrons derived from NADH and succinate to molecular oxygen, creating an electrochemical gradient over the inner membrane that drives transmembrane transport and the ATP synthase. Cytochrome c oxidase is the component of the respiratory chain that catalyzes the reduction of oxygen to water. Electrons originating from reduced cytochrome c in the intermembrane space (IMS) are transferred via the dinuclear copper A center (CU(A)) of subunit 2 and heme A of subunit 1 to the active site in subunit 1, a binuclear center (BNC) formed by heme A3 and copper B (CU(B)). The BNC reduces molecular oxygen to 2 water molecules using 4 electrons from cytochrome c in the IMS and 4 protons from the mitochondrial matrix. This chain is Cytochrome c oxidase subunit 2 (mt-co2), found in Cyprinus carpio (Common carp).